Here is a 537-residue protein sequence, read N- to C-terminus: Ataxin-10 homolog (537 aa).

The protein belongs to the ataxin-10 family.

The protein resides in the cytoplasm. Its function is as follows. May play a role in the regulation of cytokinesis. In Kluyveromyces lactis (strain ATCC 8585 / CBS 2359 / DSM 70799 / NBRC 1267 / NRRL Y-1140 / WM37) (Yeast), this protein is Ataxin-10 homolog (CTR86).